The sequence spans 139 residues: Dehydrin DHN1 (139 aa).

The interval 1–139 (MEYQGQHGHA…IKEKLPGGQH (139 aa)) is disordered. Gly residues predominate over residues 23–42 (GHGGFTGGPTGTHGAAGVGG). Over residues 49–58 (RDGHKTDGVL) the composition is skewed to basic and acidic residues. Residues 59–68 (RRSGSSSSSS) are compositionally biased toward low complexity. Over residues 83–98 (KEKIKEKLPGGAHKDA) the composition is skewed to basic and acidic residues. Residues 99-109 (AGQQQQTAMAG) show a composition bias toward low complexity. The segment covering 120–139 (TGEKKGVMDKIKEKLPGGQH) has biased composition (basic and acidic residues).

The protein belongs to the plant dehydrin family.

The chain is Dehydrin DHN1 (DHN1) from Hordeum vulgare (Barley).